The following is a 159-amino-acid chain: Galactose-specific lectin nattectin (159 aa).

The N-terminal stretch at 1–21 is a signal peptide; that stretch reads MASVPHFTVFLFLACALGIGA. Positions 22–24 are excised as a propeptide; the sequence is NVT. 3 disulfide bridges follow: Cys-31–Cys-42, Cys-59–Cys-155, and Cys-132–Cys-147. One can recognise a C-type lectin domain in the interval 38–156; the sequence is HGSRCFTFHR…CKVKRSFLCA (119 aa). 4 residues coordinate Ca(2+): Gln-122, Asp-124, Glu-130, and Asn-143. The short motif at 122-124 is the Galactose-binding element; that stretch reads QPD.

As to quaternary structure, monomer. In terms of processing, not glycosylated. In terms of tissue distribution, expressed by the venom gland.

Its subcellular location is the secreted. Its function is as follows. Galactose specific lectin that exhibits hemagglutination activity (minimum hemagluttination concentration = 2.5 ug/well) in a calcium-independent fashion. Has remarkable pro-inflammatory activity, inducing neutrophil mobilization in mice. Plays a crucial role in the innate immune system and chronic manifestations, especially in neutrophil mobilization. This is Galactose-specific lectin nattectin from Thalassophryne nattereri (Copper Joe toadfish).